The sequence spans 76 residues: Large ribosomal subunit protein bL28 (76 aa).

The tract at residues 21–42 (RGKAKKEGGVGKHITKTSRRRQ) is disordered. The span at 33–42 (HITKTSRRRQ) shows a compositional bias: basic residues.

The protein belongs to the bacterial ribosomal protein bL28 family.

The polypeptide is Large ribosomal subunit protein bL28 (Halothermothrix orenii (strain H 168 / OCM 544 / DSM 9562)).